The sequence spans 322 residues: Cytochrome f (322 aa).

The signal sequence occupies residues 1–35; the sequence is MQTRNTFSWTWIREEITRSISVSLMIYIITWSSIS. Heme is bound by residues tyrosine 38, cysteine 58, cysteine 61, and histidine 62. The helical transmembrane segment at 288–308 threads the bilayer; it reads VQGLLFFLGSVVLAQIFLVLK.

This sequence belongs to the cytochrome f family. The 4 large subunits of the cytochrome b6-f complex are cytochrome b6, subunit IV (17 kDa polypeptide, petD), cytochrome f and the Rieske protein, while the 4 small subunits are PetG, PetL, PetM and PetN. The complex functions as a dimer. Requires heme as cofactor.

The protein resides in the plastid. Its subcellular location is the chloroplast thylakoid membrane. Component of the cytochrome b6-f complex, which mediates electron transfer between photosystem II (PSII) and photosystem I (PSI), cyclic electron flow around PSI, and state transitions. The protein is Cytochrome f of Aethionema cordifolium (Lebanon stonecress).